A 920-amino-acid chain; its full sequence is 3-hydroxy-3-methylglutaryl-coenzyme A reductase (920 aa).

A helical transmembrane segment spans residues 12 to 32 (FCASHPWEVIVALLTITACML). N-linked (GlcNAc...) asparagine glycosylation occurs at N37. Positions 62-85 (GAGSGASGTIPPSSMGGSATSSRH) are disordered. Residues 71 to 82 (IPPSSMGGSATS) show a composition bias toward polar residues. One can recognise an SSD domain in the interval 106–263 (DVILMTIVRC…MTFYPACLSL (158 aa)). The next 5 helical transmembrane spans lie at 107–129 (VILM…CSLH), 136–156 (VLGI…TAII), 170–190 (LFFL…QLAL), 208–228 (LLGP…GVGT), and 237–257 (VLCM…MTFY). Residues N342 and N346 are each glycosylated (N-linked (GlcNAc...) asparagine). Residues 364-384 (SADHIVISIVLIALVVKFICF) traverse the membrane as a helical segment. Residues 385 to 498 (DNRDPLPDQL…EEIVSIVHAG (114 aa)) form a linker region. Residues N443 and N475 are each glycosylated (N-linked (GlcNAc...) asparagine). The catalytic stretch occupies residues 499–829 (GTHCPLHKIE…TCTMPSLEVG (331 aa)). Catalysis depends on charge relay system residues E586, K717, and D793. Residues N797 and N802 are each glycosylated (N-linked (GlcNAc...) asparagine). Residue H892 is the Proton donor of the active site. N-linked (GlcNAc...) asparagine glycans are attached at residues N896 and N910.

It belongs to the HMG-CoA reductase family. As to expression, highly expressed in embryonic gonadal mesoderm, where expression is initially broad, and then becomes restricted to a segmental pattern at stage 11. Expression is then further restricted to a cluster of cells in each of parasegments 10, 11 and 12, corresponding to the developing gonadal mesoderm. Not expressed in pole cells.

It is found in the endoplasmic reticulum membrane. It carries out the reaction (R)-mevalonate + 2 NADP(+) + CoA = (3S)-3-hydroxy-3-methylglutaryl-CoA + 2 NADPH + 2 H(+). It functions in the pathway metabolic intermediate biosynthesis; (R)-mevalonate biosynthesis; (R)-mevalonate from acetyl-CoA: step 3/3. The activity of HMG-CoA-reductase is suppressed by exogenous mevalonate. In terms of biological role, synthesis of mevalonate for the production of non-sterol isoprenoids, which are essential for growth differentiation. Provides spatial information during embryogenesis to guide migrating primordial germ cells (the pole cells) from the ectoderm to the mesoderm. Also required for association of the pole cells with the gonadal mesoderm. This chain is 3-hydroxy-3-methylglutaryl-coenzyme A reductase (Hmgcr), found in Drosophila melanogaster (Fruit fly).